Reading from the N-terminus, the 211-residue chain is Ubiquitin-conjugating enzyme E2 S (211 aa).

The UBC core domain occupies 11–157; that stretch reads HVIRQVYKEV…ARLMTEIHAH (147 aa). The active-site Glycyl thioester intermediate is the C95. Residues 157 to 167 are compositionally biased toward basic and acidic residues; that stretch reads HSSSLRGKDPT. The disordered stretch occupies residues 157–211; the sequence is HSSSLRGKDPTDPCSSASVTGALGDGPMAKKHAGDRDKKLAAKKKTDKKRALRRL. Positions 197-211 are enriched in basic residues; that stretch reads AAKKKTDKKRALRRL.

Belongs to the ubiquitin-conjugating enzyme family.

It catalyses the reaction S-ubiquitinyl-[E1 ubiquitin-activating enzyme]-L-cysteine + [E2 ubiquitin-conjugating enzyme]-L-cysteine = [E1 ubiquitin-activating enzyme]-L-cysteine + S-ubiquitinyl-[E2 ubiquitin-conjugating enzyme]-L-cysteine.. Its pathway is protein modification; protein ubiquitination. In terms of biological role, catalyzes the covalent attachment of ubiquitin to other proteins. Acts as an essential factor of the anaphase promoting complex/cyclosome (APC/C), a cell cycle-regulated ubiquitin ligase that controls progression through mitosis. Acts by specifically elongating 'Lys-11'-linked polyubiquitin chains initiated by the E2 enzyme ube2c/ubch10 on APC/C substrates, enhancing the degradation of APC/C substrates by the proteasome and promoting mitotic exit. In Aquarana catesbeiana (American bullfrog), this protein is Ubiquitin-conjugating enzyme E2 S (ube2s).